A 442-amino-acid chain; its full sequence is Protein PhoH2 (442 aa).

A PINc domain is found at 3-135; that stretch reads KIYVLDTNVL…LVSKDVLVRV (133 aa). 259-266 is an ATP binding site; sequence GKAGTGKT.

In the N-terminal section; belongs to the PINc/VapC protein family. It in the C-terminal section; belongs to the PhoH family.

The enzyme catalyses n ATP + n H2O + wound RNA = n ADP + n phosphate + unwound RNA.. The catalysed reaction is ATP + H2O = ADP + phosphate + H(+). It catalyses the reaction GTP + H2O = GDP + phosphate + H(+). Its function is as follows. Unwinds and/or cleaves 5'-tailed RNA in vitro. Has ATPase and GTPase activities. Unlike the protein in mycobacteria there does not seem to be an antitoxin gene upstream, suggesting this is not a toxin-antitoxin system. This Bacillus subtilis (strain 168) protein is Protein PhoH2.